A 545-amino-acid chain; its full sequence is Chaperonin GroEL (545 aa).

ATP is bound by residues 29–32 (TLGP), Lys-50, 86–90 (DGTTT), Gly-415, and Asp-495.

Belongs to the chaperonin (HSP60) family. In terms of assembly, forms a cylinder of 14 subunits composed of two heptameric rings stacked back-to-back. Interacts with the co-chaperonin GroES.

The protein localises to the cytoplasm. The enzyme catalyses ATP + H2O + a folded polypeptide = ADP + phosphate + an unfolded polypeptide.. Functionally, together with its co-chaperonin GroES, plays an essential role in assisting protein folding. The GroEL-GroES system forms a nano-cage that allows encapsulation of the non-native substrate proteins and provides a physical environment optimized to promote and accelerate protein folding. This is Chaperonin GroEL from Bacteroides fragilis (strain ATCC 25285 / DSM 2151 / CCUG 4856 / JCM 11019 / LMG 10263 / NCTC 9343 / Onslow / VPI 2553 / EN-2).